Consider the following 556-residue polypeptide: MAFNFNWSPLMADASFYTRAQDLLTAALNKSPKPPIIVDDIHVTELNLGSIPPELEILEIGDLAEDRFRGIFKMSYTGDAFLTLKTRVQANPLNTFLLTRPTFGSPVPLAAATPLTIPLQITLSDFKLSGFVILVFSKQKGITVVFRNDPLESLKVSSTFDSIPFVRDFLQKEIEAQLRILFMDELPAIIHRLSLRLWVPEYRTGEEMNDETDNTAKSSEGPGQDPLASPPQDPVDSLGNALNESEIASLSLDSSVETHSLFSQKNLLRLAALTDSQRTLSLFTPSIQEVVYRAWTSPTDTSEFPSSVISPLSPTLSREQSQMGSMSSLHETASNASMQSRPSMSSHSFSTSTYGLSLGAGRHSKAHARKRKKRVVDLRRPKTTDDAMSVSDESVMTESSRPPSIASAPLPIVNEPSDDPVTPPLSPEVDCHLPIIPERHLPSFSRPTRRDADLSYSHETIRGPKAEDVDATPRATMRGYPQERAEAGPSSNQRTPLPAAVLPFSKDENANVDPVLVDRLAGEIARRMREDKLMTNACSGFWSRQHEDSPPPAYGH.

Residues 1 to 195 (MAFNFNWSPL…LPAIIHRLSL (195 aa)) form the SMP-LTD domain. Disordered stretches follow at residues 206–239 (EEMN…DSLG), 299–423 (TDTS…PVTP), and 440–473 (HLPS…DATP). The segment covering 299-333 (TDTSEFPSSVISPLSPTLSREQSQMGSMSSLHETA) has biased composition (polar residues). Residues 334–357 (SNASMQSRPSMSSHSFSTSTYGLS) are compositionally biased toward low complexity. Residues 362–374 (RHSKAHARKRKKR) are compositionally biased toward basic residues. Residues 375 to 385 (VVDLRRPKTTD) are compositionally biased toward basic and acidic residues. Residues 391–402 (SDESVMTESSRP) show a composition bias toward polar residues. A compositionally biased stretch (basic and acidic residues) spans 459–468 (ETIRGPKAED).

The protein belongs to the MDM34 family. In terms of assembly, component of the ER-mitochondria encounter structure (ERMES) or MDM complex, composed of mmm1, mdm10, mdm12 and mdm34.

The protein resides in the mitochondrion outer membrane. Component of the ERMES/MDM complex, which serves as a molecular tether to connect the endoplasmic reticulum (ER) and mitochondria. Components of this complex are involved in the control of mitochondrial shape and protein biogenesis, and function in nonvesicular lipid trafficking between the ER and mitochondria. Mdm34 is required for the interaction of the ER-resident membrane protein mmm1 and the outer mitochondrial membrane-resident beta-barrel protein mdm10. The protein is Mitochondrial distribution and morphology protein 34-2 of Penicillium rubens (strain ATCC 28089 / DSM 1075 / NRRL 1951 / Wisconsin 54-1255) (Penicillium chrysogenum).